We begin with the raw amino-acid sequence, 147 residues long: Deoxyuridine 5'-triphosphate nucleotidohydrolase (147 aa).

Residues Arg-67 to Gly-69, Asn-80, and Thr-84 to Asp-86 each bind substrate.

This sequence belongs to the dUTPase family. The cofactor is Mg(2+).

It catalyses the reaction dUTP + H2O = dUMP + diphosphate + H(+). It functions in the pathway pyrimidine metabolism; dUMP biosynthesis; dUMP from dCTP (dUTP route): step 2/2. In terms of biological role, this enzyme is involved in nucleotide metabolism: it produces dUMP, the immediate precursor of thymidine nucleotides and it decreases the intracellular concentration of dUTP so that uracil cannot be incorporated into DNA. The polypeptide is Deoxyuridine 5'-triphosphate nucleotidohydrolase (Anaeromyxobacter dehalogenans (strain 2CP-C)).